We begin with the raw amino-acid sequence, 295 residues long: Glutamyl-Q tRNA(Asp) synthetase (295 aa).

L-glutamate is bound by residues 9–13 and E45; that span reads RFAPT. A 'HIGH' region motif is present at residues 12-22; sequence PTPSGYLHFGS. 4 residues coordinate Zn(2+): C101, C103, Y115, and C119. Residues Y172 and R190 each contribute to the L-glutamate site. The 'KMSKS' region signature appears at 228-232; that stretch reads KLGKS. K231 lines the ATP pocket.

It belongs to the class-I aminoacyl-tRNA synthetase family. GluQ subfamily. It depends on Zn(2+) as a cofactor.

Functionally, catalyzes the tRNA-independent activation of glutamate in presence of ATP and the subsequent transfer of glutamate onto a tRNA(Asp). Glutamate is transferred on the 2-amino-5-(4,5-dihydroxy-2-cyclopenten-1-yl) moiety of the queuosine in the wobble position of the QUC anticodon. This Pseudomonas syringae pv. tomato (strain ATCC BAA-871 / DC3000) protein is Glutamyl-Q tRNA(Asp) synthetase.